The following is a 201-amino-acid chain: Natural cytotoxicity triggering receptor 3 (201 aa).

The signal sequence occupies residues methionine 1 to alanine 18. Positions leucine 19–valine 126 constitute an Ig-like domain. Topologically, residues leucine 19 to glutamine 133 are extracellular. A disulfide bond links cysteine 39 and cysteine 108. Asparagine 42 and asparagine 121 each carry an N-linked (GlcNAc...) asparagine glycan. A helical membrane pass occupies residues leucine 134 to valine 154. Topologically, residues alanine 155–glycine 201 are cytoplasmic.

This sequence belongs to the natural cytotoxicity receptor (NCR) family. As to quaternary structure, homodimer in the unliganted form. Interacts with CD3Z. Interacts with and is activated by binding to NCR3LG1. Interacts with and is activated by binding to BAG6. Interacts with and is inhibited by binding to LGALS3.

It localises to the cell membrane. Functionally, cell membrane receptor of natural killer/NK cells that is activated by binding of extracellular ligands including BAG6 and NCR3LG1. Stimulates NK cells cytotoxicity toward neighboring cells producing these ligands. It controls, for instance, NK cells cytotoxicity against tumor cells. Engagement of NCR3 by BAG6 also promotes myeloid dendritic cells (DC) maturation, both through killing DCs that did not acquire a mature phenotype, and inducing the release by NK cells of TNFA and IFNG that promote DC maturation. This is Natural cytotoxicity triggering receptor 3 (NCR3) from Macaca mulatta (Rhesus macaque).